The sequence spans 98 residues: DNA-binding protein Fis (98 aa).

Residues 74–93 (QTRAATMLGINRGTLRKKLK) constitute a DNA-binding region (H-T-H motif).

The protein belongs to the transcriptional regulatory Fis family. In terms of assembly, homodimer.

Functionally, activates ribosomal RNA transcription. Plays a direct role in upstream activation of rRNA promoters. The sequence is that of DNA-binding protein Fis from Haemophilus ducreyi (strain 35000HP / ATCC 700724).